A 534-amino-acid polypeptide reads, in one-letter code: uncharacterized protein (534 aa).

Disordered stretches follow at residues 1 to 150 (MSDS…DIPP), 252 to 284 (RRFR…NGQP), and 383 to 434 (WKSQ…PSLP). Positions 8–67 (SQREDNYSRDRRSRFTEDSYSRRDSQRSGNEAPRESRYYRKEEHLQERSRSRSPARDSRW) are enriched in basic and acidic residues. Positions 102–113 (SLQSTKATSSRT) are enriched in polar residues. The segment covering 130–141 (PSAPAPPLPPSS) has biased composition (pro residues). Residues 252–262 (RRFRRREDNER) show a composition bias toward basic and acidic residues. Over residues 263-272 (NNSNSPRNFS) the composition is skewed to low complexity. Positions 393–408 (NQGNRAYNPPNRNQAF) are enriched in polar residues.

This is an uncharacterized protein from Schizosaccharomyces pombe (strain 972 / ATCC 24843) (Fission yeast).